We begin with the raw amino-acid sequence, 67 residues long: Prokaryotic ubiquitin-like protein Pup (67 aa).

The segment covering 1 to 36 (MPQQFEQPQAQQAVTQEDDALATTQAATQTESTDQA) has biased composition (low complexity). The disordered stretch occupies residues 1 to 38 (MPQQFEQPQAQQAVTQEDDALATTQAATQTESTDQADV). Positions 23-61 (TTQAATQTESTDQADVLDDILDDIESTLETNAEEYVNSF) are ARC ATPase binding. Residue E67 forms an Isoglutamyl lysine isopeptide (Glu-Lys) (interchain with K-? in acceptor proteins) linkage.

The protein belongs to the prokaryotic ubiquitin-like protein family. In terms of assembly, strongly interacts with the proteasome-associated ATPase ARC through a hydrophobic interface; the interacting region of Pup lies in its C-terminal half. There is one Pup binding site per ARC hexamer ring.

Its pathway is protein degradation; proteasomal Pup-dependent pathway. Its function is as follows. Protein modifier that is covalently attached to lysine residues of substrate proteins, thereby targeting them for proteasomal degradation. The tagging system is termed pupylation. The sequence is that of Prokaryotic ubiquitin-like protein Pup from Bifidobacterium longum subsp. infantis (strain ATCC 15697 / DSM 20088 / JCM 1222 / NCTC 11817 / S12).